The chain runs to 1218 residues: Protein jagged-1 (1218 aa).

The N-terminal stretch at 1–33 (MRSPRTRGRSGRPLSLLLALLCALRAKVCGASG) is a signal peptide. Residues 34–1067 (QFELEILSMQ…QRRPLKNRTD (1034 aa)) are Extracellular-facing. N143 carries an N-linked (GlcNAc...) asparagine glycan. Positions 185–229 (VTCDDYYYGFGCNKFCRPRDDFFGHYACDQNGNKTCMEGWMGPEC) constitute a DSL domain. 2 disulfides stabilise this stretch: C187–C196 and C200–C212. Positions 199–207 (FCRPRDDFF) are important for interaction with NOTCH1. N-linked (GlcNAc...) asparagine glycosylation occurs at N217. 40 disulfide bridges follow: C220–C229, C234–C245, C238–C251, C253–C262, C265–C276, C271–C282, C284–C293, C300–C312, C306–C322, C324–C333, C340–C351, C345–C360, C362–C371, C378–C389, C383–C398, C400–C409, C416–C427, C421–C436, C438–C447, C454–C464, C458–C473, C475–C484, C491–C502, C496–C511, C513–C522, C529–C540, C534–C549, C551–C560, C578–C605, C599–C615, C617–C626, C633–C644, C638–C653, C655–C664, C671–C682, C676–C691, C693–C702, C709–C720, C714–C729, and C731–C740. The EGF-like 1 domain maps to 230–263 (NRAICRQGCSPKHGSCKLPGDCRCQYGWQGLYCD). One can recognise an EGF-like 2; atypical domain in the interval 264 to 294 (KCIPHPGCVHGICNEPWQCLCETNWGGQLCD). 2 consecutive EGF-like domains span residues 296–334 (DLNY…PNCE) and 336–372 (AEHA…PTCS). The 37-residue stretch at 374–410 (NIDDCSPNNCSHGGTCQDLVNGFKCVCPPQWTGKTCQ) folds into the EGF-like 5; calcium-binding domain. The N-linked (GlcNAc...) asparagine glycan is linked to N382. Residues 412 to 448 (DANECEAKPCVNAKSCKNLIASYYCDCLPGWMGQNCD) form the EGF-like 6; calcium-binding domain. An EGF-like 7; calcium-binding domain is found at 450–485 (NINDCLGQCQNDASCRDLVNGYRCICPPGYAGDHCE). The region spanning 487–523 (DIDECASNPCLNGGHCQNEINRFQCLCPTGFSGNLCQ) is the EGF-like 8; calcium-binding domain. 2 consecutive EGF-like domains span residues 525-561 (DIDY…KNCS) and 586-627 (DTPE…TYCH). The N-linked (GlcNAc...) asparagine glycan is linked to N559. The EGF-like 11; calcium-binding domain occupies 629–665 (NINDCESNPCRNGGTCIDGVNSYKCICSDGWEGAYCE). The EGF-like 12; calcium-binding domain occupies 667–703 (NINDCSQNPCHNGGTCRDLVNDFYCDCKNGWKGKTCH). EGF-like domains lie at 705-741 (RDSQ…TTCN) and 744-780 (RNSS…PICA). Residue N745 is glycosylated (N-linked (GlcNAc...) asparagine). Disulfide bonds link C748-C759, C753-C768, C770-C779, C786-C797, C791-C806, C808-C817, C824-C835, C829-C844, and C846-C855. The region spanning 782 to 818 (NTNDCSPHPCYNSGTCVDGDNWYRCECAPGFAGPDCR) is the EGF-like 15; calcium-binding domain. Residues 820–856 (NINECQSSPCAFGATCVDEINGYRCVCPPGHSGAKCQ) enclose the EGF-like 16; calcium-binding domain. N960, N991, N1045, and N1064 each carry an N-linked (GlcNAc...) asparagine glycan. Residues 1068–1093 (FLVPLLSSVLTVAWICCLVTAFYWCL) traverse the membrane as a helical segment. The Cytoplasmic segment spans residues 1094-1218 (RKRRKPGSHT…QSLNRMEYIV (125 aa)). A disordered region spans residues 1152–1218 (HNSEVEEDDM…QSLNRMEYIV (67 aa)). The segment covering 1189–1199 (TPTKHPNWTNK) has biased composition (polar residues).

In terms of assembly, interacts with NOTCH2 and NOTCH3. Interacts with NOTCH1 (in the presence of calcium ions). In terms of tissue distribution, widely expressed in adult and fetal tissues. In cervix epithelium expressed in undifferentiated subcolumnar reserve cells and squamous metaplasia. Expression is up-regulated in cervical squamous cell carcinoma. Expressed in bone marrow cell line HS-27a which supports the long-term maintenance of immature progenitor cells.

It localises to the membrane. The protein localises to the cell membrane. Functionally, ligand for multiple Notch receptors and involved in the mediation of Notch signaling. May be involved in cell-fate decisions during hematopoiesis. Seems to be involved in early and late stages of mammalian cardiovascular development. Inhibits myoblast differentiation. Enhances fibroblast growth factor-induced angiogenesis (in vitro). In Homo sapiens (Human), this protein is Protein jagged-1 (JAG1).